The chain runs to 550 residues: Leiomodin-2 (550 aa).

The interval 1–47 (MSTFGYRRGLSKYESIDEDELLASLSPEELKELERELEDIEPDRNLP) is interaction with tropomyosin alpha. Interaction with actin stretches follow at residues 1 to 165 (MSTF…TDNS), 166 to 500 (KPKT…KEIK), and 524 to 543 (VHEN…LRRV). A phosphoserine mark is found at Ser11, Ser15, and Ser24. Basic and acidic residues predominate over residues 84–94 (ERLGECGKVAE). Disordered regions lie at residues 84–202 (ERLG…PCGN) and 359–527 (MDKQ…VHEN). The stretch at 91-147 (KVAEEDKEESEEELIFTESNSEVSEEVCTEDEEESQEEEEDSEEEEDSEEEEETTEA) forms a coiled coil. Composition is skewed to acidic residues over residues 95 to 105 (EDKEESEEELI) and 113 to 145 (VSEE…EETT). Polar residues-rich tracts occupy residues 151 to 164 (INGT…NTDN) and 170 to 193 (FKSQ…NSES). Basic and acidic residues predominate over residues 359–377 (MDKQRQKRMQEQKQQEGHD). A compositionally biased stretch (polar residues) spans 391 to 402 (TPGSSPYASPRQ). Ser407 is subject to Phosphoserine. Residues 421-452 (PPSPVAPPPPPPPPPLPPHMLPPPPPPPAPPL) show a composition bias toward pro residues. Positions 468-479 (QQESAQRALQNG) are enriched in polar residues. Positions 480 to 490 (QRKKKGKKVKK) are enriched in basic residues. Positions 497–515 (KEIKNSLRSVQEKKMEDSS) are enriched in basic and acidic residues. One can recognise a WH2 domain in the interval 524–543 (VHENLMEAIRGSSIRQLRRV).

The protein belongs to the tropomodulin family. Can bind at least three actin monomers and thereby provides a nucleus for actin filament formation. Interacts (via N-terminus) with tropomyosin alpha (TPM1) (via N-terminus). May also interact with TPM2 (via N-terminus). Interacts with FLII. Detected in neonate heart (at protein level). Detected in embryonic heart and in pharyngeal arches. Detected in adult heart.

It localises to the cytoplasm. The protein resides in the myofibril. Its subcellular location is the sarcomere. It is found in the m line. The protein localises to the cytoskeleton. Mediates nucleation of actin filaments and thereby promotes actin polymerization. Plays a role in the regulation of actin filament length. Required for normal sarcomere organization in the heart, and for normal heart function. This Mus musculus (Mouse) protein is Leiomodin-2 (Lmod2).